The primary structure comprises 332 residues: MSTVKEQLIENLIEEDEVSQSKITIVGTGAVGMACAICILLKDLADELALVDVAVDKLKGETMDLQHGSLFFNTSKIVSGKDYSVSANSKIVIVTAGARQQEGESRLALVQRNVNIMKSIIPTIVQHSPDCKMLIVSNPVDILTYVAWKLSGLPATRVIGSGCNLDSARFRYLIGKKLGVHPTSCHGWIIGEHGDSSVPLWSGVNVAGVALKTLDPKLGTDSDKDQWKNIHKQVIGSAYEIIKLKGYTSWAIGLSVTDLVGSILKNLRRVHPVSTMVKGLYGIKEEIFLSIPCVLGRNGVSDIVKVNLNAEEEALFKKSANTLWNVQKDLTF.

Residues 29–57 (GAVG…AVDK) and arginine 99 each bind NAD(+). Substrate is bound by residues arginine 106, asparagine 138, and arginine 169. An NAD(+)-binding site is contributed by asparagine 138. Histidine 193 (proton acceptor) is an active-site residue. Threonine 248 provides a ligand contact to substrate. Serine 301 carries the post-translational modification Phosphoserine.

The protein belongs to the LDH/MDH superfamily. LDH family. As to quaternary structure, homotetramer. Interacts with RABL2/RABL2A; binds preferentially to GTP-bound RABL2.

The protein resides in the cytoplasm. The enzyme catalyses (S)-lactate + NAD(+) = pyruvate + NADH + H(+). The protein operates within fermentation; pyruvate fermentation to lactate; (S)-lactate from pyruvate: step 1/1. Possible role in sperm motility. This Sus scrofa (Pig) protein is L-lactate dehydrogenase C chain (LDHC).